A 193-amino-acid chain; its full sequence is Ion-translocating oxidoreductase complex subunit A (193 aa).

6 helical membrane passes run 5–25, 39–59, 65–85, 102–122, 134–154, and 171–191; these read ILLI…FLGL, IGMG…AYLV, IPLE…AVIV, LLGI…VALL, VLYG…FAAL, and SIAL…TGLV.

This sequence belongs to the NqrDE/RnfAE family. In terms of assembly, the complex is composed of six subunits: RnfA, RnfB, RnfC, RnfD, RnfE and RnfG.

It is found in the cell inner membrane. Part of a membrane-bound complex that couples electron transfer with translocation of ions across the membrane. This chain is Ion-translocating oxidoreductase complex subunit A, found in Actinobacillus pleuropneumoniae serotype 5b (strain L20).